A 94-amino-acid polypeptide reads, in one-letter code: Acylphosphatase (94 aa).

An Acylphosphatase-like domain is found at 5–94 (RLTAFVHGHV…PRDVEGFVER (90 aa)). Active-site residues include Arg20 and Asn38.

The protein belongs to the acylphosphatase family.

The enzyme catalyses an acyl phosphate + H2O = a carboxylate + phosphate + H(+). This chain is Acylphosphatase (acyP), found in Corynebacterium glutamicum (strain ATCC 13032 / DSM 20300 / JCM 1318 / BCRC 11384 / CCUG 27702 / LMG 3730 / NBRC 12168 / NCIMB 10025 / NRRL B-2784 / 534).